A 155-amino-acid polypeptide reads, in one-letter code: D-aminoacyl-tRNA deacylase (155 aa).

Positions 137–138 (GP) match the Gly-cisPro motif, important for rejection of L-amino acids motif.

The protein belongs to the DTD family. In terms of assembly, homodimer.

Its subcellular location is the cytoplasm. The enzyme catalyses glycyl-tRNA(Ala) + H2O = tRNA(Ala) + glycine + H(+). It catalyses the reaction a D-aminoacyl-tRNA + H2O = a tRNA + a D-alpha-amino acid + H(+). Its function is as follows. An aminoacyl-tRNA editing enzyme that deacylates mischarged D-aminoacyl-tRNAs. Also deacylates mischarged glycyl-tRNA(Ala), protecting cells against glycine mischarging by AlaRS. Acts via tRNA-based rather than protein-based catalysis; rejects L-amino acids rather than detecting D-amino acids in the active site. By recycling D-aminoacyl-tRNA to D-amino acids and free tRNA molecules, this enzyme counteracts the toxicity associated with the formation of D-aminoacyl-tRNA entities in vivo and helps enforce protein L-homochirality. This Roseiflexus sp. (strain RS-1) protein is D-aminoacyl-tRNA deacylase.